A 381-amino-acid chain; its full sequence is Secretion apparatus protein BsaZ (381 aa).

Transmembrane regions (helical) follow at residues 28-48 (IVAL…VDLT), 80-100 (IAAP…LVQS), 134-154 (AVKA…FADL), and 175-195 (IVLT…VLIV). The disordered stretch occupies residues 343–381 (NRGGPPREMPPEATHAPDAHGGDAASGGATSAQAGERNA). The segment covering 364–381 (GDAASGGATSAQAGERNA) has biased composition (low complexity).

The protein belongs to the type III secretion exporter family.

The protein resides in the cell membrane. Its function is as follows. Part of the bsa type III secretion system, is involved in the intracellular replication of invading bacteria inside the host cell. Probably necessary for the lysis of the vacuole membrane and escape into the host cell cytoplasm. This chain is Secretion apparatus protein BsaZ (bsaZ), found in Burkholderia thailandensis (strain ATCC 700388 / DSM 13276 / CCUG 48851 / CIP 106301 / E264).